We begin with the raw amino-acid sequence, 134 residues long: Loki profilin-1 (134 aa).

Positions 55–62 (LALGKKGI) are loki loop.

It belongs to the Asgard profilin family.

The protein resides in the cytoplasm. The protein localises to the cytoskeleton. Its activity is regulated as follows. Inhibition of rabbit actin polymerization is reduced by phosphatidylinositol-(4,5)-P2(1,2-dipalmitoyl), a soluble form of the phospholipid phosphatidylinositol, suggesting an unknown lipid might regulate actin-profilin interaction in vivo. In terms of biological role, binds to actin and affects the structure of the cytoskeleton. At high concentrations inhibits spontaneous rabbit actin nucleation. This strongly suggests this archaea has a profilin-regulated actin system, and actin-type genes can be identified in this organism. The protein is Loki profilin-1 of Lokiarchaeum sp. (strain GC14_75).